Consider the following 425-residue polypeptide: Enolase (425 aa).

A (2R)-2-phosphoglycerate-binding site is contributed by Q163. Catalysis depends on E205, which acts as the Proton donor. Mg(2+)-binding residues include D242, E285, and D312. (2R)-2-phosphoglycerate-binding residues include K337, R366, S367, and K388. The active-site Proton acceptor is K337.

It belongs to the enolase family. Mg(2+) is required as a cofactor.

It localises to the cytoplasm. The protein resides in the secreted. Its subcellular location is the cell surface. It carries out the reaction (2R)-2-phosphoglycerate = phosphoenolpyruvate + H2O. The protein operates within carbohydrate degradation; glycolysis; pyruvate from D-glyceraldehyde 3-phosphate: step 4/5. Catalyzes the reversible conversion of 2-phosphoglycerate (2-PG) into phosphoenolpyruvate (PEP). It is essential for the degradation of carbohydrates via glycolysis. The polypeptide is Enolase (Paracoccus denitrificans (strain Pd 1222)).